Here is a 45-residue protein sequence, read N- to C-terminus: Large ribosomal subunit protein bL34 (45 aa).

This sequence belongs to the bacterial ribosomal protein bL34 family.

This Paenarthrobacter aurescens (strain TC1) protein is Large ribosomal subunit protein bL34.